We begin with the raw amino-acid sequence, 61 residues long: Large ribosomal subunit protein bL28 (61 aa).

It belongs to the bacterial ribosomal protein bL28 family.

This chain is Large ribosomal subunit protein bL28, found in Lacticaseibacillus paracasei (strain ATCC 334 / BCRC 17002 / CCUG 31169 / CIP 107868 / KCTC 3260 / NRRL B-441) (Lactobacillus paracasei).